The following is a 347-amino-acid chain: RNA 3'-terminal phosphate cyclase (347 aa).

ATP contacts are provided by residues glutamine 101 and 286-289 (HMAD). The Tele-AMP-histidine intermediate role is filled by histidine 312.

This sequence belongs to the RNA 3'-terminal cyclase family. Type 1 subfamily.

It is found in the cytoplasm. The enzyme catalyses a 3'-end 3'-phospho-ribonucleotide-RNA + ATP = a 3'-end 2',3'-cyclophospho-ribonucleotide-RNA + AMP + diphosphate. Catalyzes the conversion of 3'-phosphate to a 2',3'-cyclic phosphodiester at the end of RNA. The mechanism of action of the enzyme occurs in 3 steps: (A) adenylation of the enzyme by ATP; (B) transfer of adenylate to an RNA-N3'P to produce RNA-N3'PP5'A; (C) and attack of the adjacent 2'-hydroxyl on the 3'-phosphorus in the diester linkage to produce the cyclic end product. The biological role of this enzyme is unknown but it is likely to function in some aspects of cellular RNA processing. The sequence is that of RNA 3'-terminal phosphate cyclase from Pyrobaculum neutrophilum (strain DSM 2338 / JCM 9278 / NBRC 100436 / V24Sta) (Thermoproteus neutrophilus).